Here is a 115-residue protein sequence, read N- to C-terminus: NADH-ubiquinone oxidoreductase chain 3 (115 aa).

Helical transmembrane passes span 3–23 (LMITLLTNFTLATLLVTIAFW), 55–75 (FFLVAITFLLFDLEIALLLPL), and 84–104 (LNTMLTMALLLIFLLAVSLAY).

This sequence belongs to the complex I subunit 3 family. Core subunit of respiratory chain NADH dehydrogenase (Complex I) which is composed of 45 different subunits. Interacts with TMEM186. Interacts with TMEM242.

It localises to the mitochondrion inner membrane. The catalysed reaction is a ubiquinone + NADH + 5 H(+)(in) = a ubiquinol + NAD(+) + 4 H(+)(out). Core subunit of the mitochondrial membrane respiratory chain NADH dehydrogenase (Complex I) which catalyzes electron transfer from NADH through the respiratory chain, using ubiquinone as an electron acceptor. Essential for the catalytic activity of complex I. This chain is NADH-ubiquinone oxidoreductase chain 3, found in Ovis aries (Sheep).